The following is a 1827-amino-acid chain: Laminin subunit beta-4 (1827 aa).

Positions 1–21 are cleaved as a signal peptide; the sequence is MLLRLELSALLLLLIAAPVRL. The Laminin N-terminal domain occupies 26–266; the sequence is VGNSCYPNLG…ALYEMVVRGS (241 aa). N231 carries N-linked (GlcNAc...) asparagine glycosylation. Intrachain disulfides connect C267/C276, C269/C297, C299/C308, C311/C331, C334/C343, C336/C361, C364/C373, C376/C394, C397/C410, C399/C417, C419/C428, C431/C446, C449/C463, C451/C470, C472/C481, C484/C498, C501/C513, C503/C520, and C522/C531. 4 consecutive Laminin EGF-like domains span residues 267-333, 334-396, 397-448, and 449-500; these read CFCN…VCKR, CNCH…ACIP, CDCD…GCQL, and CRCN…GCIP. The Laminin EGF-like 5; truncated domain occupies 501-544; the sequence is CDCDIGGALKTECSSVDGQCKCRPNMVGQKCNDPAPGYFLAPLD. Residues 540–847 enclose the Laminin IV type B domain; the sequence is LAPLDFYIYE…LIGSMSAFIH (308 aa). 32 disulfide bridges follow: C853-C865, C855-C872, C874-C883, C886-C898, C901-C913, C903-C920, C922-C931, C934-C944, C947-C956, C949-C963, C966-C975, C978-C992, C995-C1011, C997-C1022, C1024-C1033, C1036-C1051, C1054-C1068, C1056-C1075, C1078-C1087, C1090-C1103, C1106-C1126, C1108-C1133, C1135-C1144, C1147-C1160, C1163-C1175, C1165-C1182, C1184-C1193, C1196-C1208, C1211-C1223, C1213-C1230, C1232-C1241, and C1244-C1255. Laminin EGF-like domains lie at 853–900, 901–946, 947–994, 995–1053, 1054–1105, 1106–1162, 1163–1210, and 1211–1257; these read CNCH…GCSP, CDCD…LCRR, CQCN…PCEP, CLCP…RCKE, CCCN…DCKE, CSCD…GCQP, CNCN…QCMF, and CDCN…ACEP. An N-linked (GlcNAc...) asparagine glycan is attached at N1001. The domain II stretch occupies residues 1258 to 1449; sequence CHACNHLWEK…LSAANINEEV (192 aa). Coiled-coil stretches lie at residues 1294–1335 and 1385–1449; these read ELQH…EIID and NKIK…NEEV. The N-linked (GlcNAc...) asparagine glycan is linked to N1329. Positions 1450–1476 are domain alpha; it reads CGAPGDAECEKAKCGGALCGKCGGPDC. Residues 1477–1827 are domain I; the sequence is TGSLPISLNA…KVQRYNLCSP (351 aa). Residues N1485, N1496, N1513, N1533, N1599, N1629, N1644, N1672, N1686, N1702, N1726, N1745, N1750, and N1761 are each glycosylated (N-linked (GlcNAc...) asparagine). 2 coiled-coil regions span residues 1485-1554 and 1584-1820; these read NASK…EKVK and DEIK…DKVQ.

As to quaternary structure, laminin is a complex glycoprotein, consisting of three different polypeptide chains (alpha, beta, gamma), which are bound to each other by disulfide bonds into a cross-shaped molecule comprising one long and three short arms with globules at each end.

It is found in the secreted. The protein localises to the extracellular space. It localises to the extracellular matrix. Its subcellular location is the basement membrane. Binding to cells via a high affinity receptor, laminin is thought to mediate the attachment, migration and organization of cells into tissues during embryonic development by interacting with other extracellular matrix components. Positively regulates apical-basal distribution of Muller glia cells in the retina. The polypeptide is Laminin subunit beta-4 (lamb4) (Danio rerio (Zebrafish)).